The chain runs to 210 residues: Somatotropin (210 aa).

Residues 1 to 23 (MARVLVLLSVVLVSLLVNQGRAS) form the signal peptide. Residue H38 coordinates Zn(2+). Residues C71 and C183 are joined by a disulfide bond. Zn(2+) is bound at residue E192. Residues C200 and C208 are joined by a disulfide bond.

It belongs to the somatotropin/prolactin family.

The protein localises to the secreted. In terms of biological role, growth hormone plays an important role in growth control. This is Somatotropin (gh) from Cyprinus carpio (Common carp).